A 153-amino-acid chain; its full sequence is 6,7-dimethyl-8-ribityllumazine synthase (153 aa).

5-amino-6-(D-ribitylamino)uracil contacts are provided by residues phenylalanine 21, 55-57 (AFE), and 79-81 (TVI). (2S)-2-hydroxy-3-oxobutyl phosphate is bound at residue 84–85 (AT). Residue histidine 87 is the Proton donor of the active site. Residue phenylalanine 112 participates in 5-amino-6-(D-ribitylamino)uracil binding. Arginine 126 lines the (2S)-2-hydroxy-3-oxobutyl phosphate pocket.

Belongs to the DMRL synthase family. In terms of assembly, forms an icosahedral capsid composed of 60 subunits, arranged as a dodecamer of pentamers.

The catalysed reaction is (2S)-2-hydroxy-3-oxobutyl phosphate + 5-amino-6-(D-ribitylamino)uracil = 6,7-dimethyl-8-(1-D-ribityl)lumazine + phosphate + 2 H2O + H(+). It participates in cofactor biosynthesis; riboflavin biosynthesis; riboflavin from 2-hydroxy-3-oxobutyl phosphate and 5-amino-6-(D-ribitylamino)uracil: step 1/2. Catalyzes the formation of 6,7-dimethyl-8-ribityllumazine by condensation of 5-amino-6-(D-ribitylamino)uracil with 3,4-dihydroxy-2-butanone 4-phosphate. This is the penultimate step in the biosynthesis of riboflavin. This chain is 6,7-dimethyl-8-ribityllumazine synthase, found in Bacillus cereus (strain B4264).